Here is a 743-residue protein sequence, read N- to C-terminus: Cytosolic endo-beta-N-acetylglucosaminidase (743 aa).

M1 is subject to N-acetylmethionine. Positions M1 to S11 are enriched in low complexity. Residues M1–E55 form a disordered region. S66 is modified (phosphoserine). The BRCT domain maps to R291–W383.

The protein belongs to the glycosyl hydrolase 85 family. Widely expressed. Expressed at higher level in thymus and spleen.

The protein localises to the cytoplasm. It localises to the cytosol. The catalysed reaction is an N(4)-(oligosaccharide-(1-&gt;3)-[oligosaccharide-(1-&gt;6)]-beta-D-Man-(1-&gt;4)-beta-D-GlcNAc-(1-&gt;4)-alpha-D-GlcNAc)-L-asparaginyl-[protein] + H2O = an oligosaccharide-(1-&gt;3)-[oligosaccharide-(1-&gt;6)]-beta-D-Man-(1-&gt;4)-D-GlcNAc + N(4)-(N-acetyl-beta-D-glucosaminyl)-L-asparaginyl-[protein]. Endoglycosidase that releases N-glycans from glycoproteins by cleaving the beta-1,4-glycosidic bond in the N,N'-diacetylchitobiose core. Involved in the processing of free oligosaccharides in the cytosol. This is Cytosolic endo-beta-N-acetylglucosaminidase (ENGASE) from Homo sapiens (Human).